The sequence spans 166 residues: NAD(P)H-quinone oxidoreductase subunit I, chloroplastic (166 aa).

2 consecutive 4Fe-4S ferredoxin-type domains span residues 55-84 (GRIHFEFDKCIACEVCVRVCPIDLPVVDWK) and 95-124 (LNYSIDFGICIFCGHCVEYCPTNCLSMTEE). 8 residues coordinate [4Fe-4S] cluster: cysteine 64, cysteine 67, cysteine 70, cysteine 74, cysteine 104, cysteine 107, cysteine 110, and cysteine 114.

Belongs to the complex I 23 kDa subunit family. As to quaternary structure, NDH is composed of at least 16 different subunits, 5 of which are encoded in the nucleus. It depends on [4Fe-4S] cluster as a cofactor.

The protein resides in the plastid. It localises to the chloroplast thylakoid membrane. It carries out the reaction a plastoquinone + NADH + (n+1) H(+)(in) = a plastoquinol + NAD(+) + n H(+)(out). It catalyses the reaction a plastoquinone + NADPH + (n+1) H(+)(in) = a plastoquinol + NADP(+) + n H(+)(out). In terms of biological role, NDH shuttles electrons from NAD(P)H:plastoquinone, via FMN and iron-sulfur (Fe-S) centers, to quinones in the photosynthetic chain and possibly in a chloroplast respiratory chain. The immediate electron acceptor for the enzyme in this species is believed to be plastoquinone. Couples the redox reaction to proton translocation, and thus conserves the redox energy in a proton gradient. In Perymeniopsis ovalifolia, this protein is NAD(P)H-quinone oxidoreductase subunit I, chloroplastic.